Consider the following 104-residue polypeptide: Endogenous retrovirus group K member 21 Rec protein (104 aa).

The tract at residues 1–48 (MHPSEMQRKAPPRRRRHRNRAPLTHKMNKMVTSEQMKLPSTKKAEPPT) is disordered. Over residues 10–20 (APPRRRRHRNR) the composition is skewed to basic residues. The short motif at 13-20 (RRRRHRNR) is the Nuclear localization signal element. Residues 49 to 58 (WAQLKKLTQL) carry the Nuclear export signal motif.

Forms homodimers, homotrimers, and homotetramers via a C-terminal domain. Associates with XPO1 and with ZNF145.

The protein resides in the cytoplasm. The protein localises to the nucleus. It localises to the nucleolus. Retroviral replication requires the nuclear export and translation of unspliced, singly-spliced and multiply-spliced derivatives of the initial genomic transcript. Rec interacts with a highly structured RNA element (RcRE) present in the viral 3'LTR and recruits the cellular nuclear export machinery. This permits export to the cytoplasm of unspliced genomic or incompletely spliced subgenomic viral transcripts. The sequence is that of Endogenous retrovirus group K member 21 Rec protein (ERVK-21) from Homo sapiens (Human).